We begin with the raw amino-acid sequence, 67 residues long: Large ribosomal subunit protein bL35 (67 aa).

It belongs to the bacterial ribosomal protein bL35 family.

The protein is Large ribosomal subunit protein bL35 of Agrobacterium fabrum (strain C58 / ATCC 33970) (Agrobacterium tumefaciens (strain C58)).